Consider the following 123-residue polypeptide: Ribonuclease P protein component (123 aa).

Belongs to the RnpA family. As to quaternary structure, consists of a catalytic RNA component (M1 or rnpB) and a protein subunit.

It catalyses the reaction Endonucleolytic cleavage of RNA, removing 5'-extranucleotides from tRNA precursor.. RNaseP catalyzes the removal of the 5'-leader sequence from pre-tRNA to produce the mature 5'-terminus. It can also cleave other RNA substrates such as 4.5S RNA. The protein component plays an auxiliary but essential role in vivo by binding to the 5'-leader sequence and broadening the substrate specificity of the ribozyme. The polypeptide is Ribonuclease P protein component (Streptomyces avermitilis (strain ATCC 31267 / DSM 46492 / JCM 5070 / NBRC 14893 / NCIMB 12804 / NRRL 8165 / MA-4680)).